A 344-amino-acid chain; its full sequence is AP2/ERF and B3 domain-containing transcription factor RAV1 (344 aa).

Over residues 1–15 (MESSSVDESTTSTGS) the composition is skewed to low complexity. A disordered region spans residues 1-22 (MESSSVDESTTSTGSICETPAI). Positions 61–116 (KYKGVVPQPNGRWGAQIYEKHQRVWLGTFNEEDEAARAYDVAVHRFRRRDAVTNFK) form a DNA-binding region, AP2/ERF. Residues 148 to 169 (ELEQSKRRRNGNGNMTRTLLTS) are disordered. The segment at residues 188-292 (FEKAVTPSDV…QLYIGWKSRS (105 aa)) is a DNA-binding region (TF-B3).

This sequence belongs to the AP2/ERF transcription factor family. RAV subfamily. Monomer. Expressed in all tissues examined: Roots, rosette leaves, cauline leaves, inflorescence stems, flowers and siliques. Highest expression in roots and rosette leaves. Very low expression in flowers.

The protein localises to the nucleus. Its function is as follows. Binds specifically to bipartite recognition sequences composed of two unrelated motifs, 5'-CAACA-3' and 5'-CACCTG-3'. May function as negative regulator of plant growth and development. This is AP2/ERF and B3 domain-containing transcription factor RAV1 (RAV1) from Arabidopsis thaliana (Mouse-ear cress).